Here is a 105-residue protein sequence, read N- to C-terminus: Large ribosomal subunit protein uL24 (105 aa).

A disordered region spans residues 1-25 (MHIKKGDNVKVIAGKDKGKEGKVVS).

The protein belongs to the universal ribosomal protein uL24 family. Part of the 50S ribosomal subunit.

In terms of biological role, one of two assembly initiator proteins, it binds directly to the 5'-end of the 23S rRNA, where it nucleates assembly of the 50S subunit. Functionally, one of the proteins that surrounds the polypeptide exit tunnel on the outside of the subunit. In Staphylococcus saprophyticus subsp. saprophyticus (strain ATCC 15305 / DSM 20229 / NCIMB 8711 / NCTC 7292 / S-41), this protein is Large ribosomal subunit protein uL24.